A 357-amino-acid chain; its full sequence is 4-hydroxy-2-oxovalerate aldolase (357 aa).

Positions 1–21 (MSQEAARDAAAGRPVQIHDPT) are disordered. One can recognise a Pyruvate carboxyltransferase domain in the interval 15 to 265 (VQIHDPTLRD…RTGIDLYRLL (251 aa)). Residue 23 to 24 (RD) coordinates substrate. Residue Asp-24 coordinates Mn(2+). Catalysis depends on His-27, which acts as the Proton acceptor. Residues Ser-177 and His-204 each coordinate substrate. Positions 204 and 206 each coordinate Mn(2+).

Belongs to the 4-hydroxy-2-oxovalerate aldolase family.

The enzyme catalyses (S)-4-hydroxy-2-oxopentanoate = acetaldehyde + pyruvate. Involved in the biosynthesis of the peptidyl nucleoside antibiotic nikkomycin. The chain is 4-hydroxy-2-oxovalerate aldolase from Streptomyces tendae.